The primary structure comprises 635 residues: Threonine--tRNA ligase (635 aa).

One can recognise a TGS domain in the interval 1–61; the sequence is MIKITLKDGK…HKDSSLEILT (61 aa). The segment at 242 to 532 is catalytic; it reads DHRKLGKELD…LIEQYAGAFP (291 aa). Zn(2+) is bound by residues cysteine 333, histidine 384, and histidine 509.

It belongs to the class-II aminoacyl-tRNA synthetase family. Homodimer. Zn(2+) serves as cofactor.

Its subcellular location is the cytoplasm. It carries out the reaction tRNA(Thr) + L-threonine + ATP = L-threonyl-tRNA(Thr) + AMP + diphosphate + H(+). In terms of biological role, catalyzes the attachment of threonine to tRNA(Thr) in a two-step reaction: L-threonine is first activated by ATP to form Thr-AMP and then transferred to the acceptor end of tRNA(Thr). Also edits incorrectly charged L-seryl-tRNA(Thr). The sequence is that of Threonine--tRNA ligase from Clostridium botulinum (strain 657 / Type Ba4).